Consider the following 270-residue polypeptide: Probable 6-oxopurine nucleoside phosphorylase (270 aa).

Residues S10 and R48–H49 each bind phosphate. A substrate-binding site is contributed by M191. T192 contributes to the phosphate binding site. N215–A217 contacts substrate.

This sequence belongs to the PNP/MTAP phosphorylase family. MTAP subfamily. In terms of assembly, homohexamer. Dimer of a homotrimer.

The catalysed reaction is a purine D-ribonucleoside + phosphate = a purine nucleobase + alpha-D-ribose 1-phosphate. The protein operates within purine metabolism; purine nucleoside salvage. In terms of biological role, purine nucleoside phosphorylase which is highly specific for 6-oxopurine nucleosides. Cleaves guanosine or inosine to respective bases and sugar-1-phosphate molecules. Involved in purine salvage. In Korarchaeum cryptofilum (strain OPF8), this protein is Probable 6-oxopurine nucleoside phosphorylase.